A 321-amino-acid polypeptide reads, in one-letter code: Ribosomal RNA small subunit methyltransferase H (321 aa).

Residues 40–42 (GGH), Asp-60, Phe-84, Asp-106, and Gln-113 contribute to the S-adenosyl-L-methionine site.

Belongs to the methyltransferase superfamily. RsmH family.

Its subcellular location is the cytoplasm. The catalysed reaction is cytidine(1402) in 16S rRNA + S-adenosyl-L-methionine = N(4)-methylcytidine(1402) in 16S rRNA + S-adenosyl-L-homocysteine + H(+). Specifically methylates the N4 position of cytidine in position 1402 (C1402) of 16S rRNA. This chain is Ribosomal RNA small subunit methyltransferase H, found in Pasteurella multocida (strain Pm70).